The sequence spans 257 residues: Putative hydro-lyase Bamb_5282 (257 aa).

The protein belongs to the D-glutamate cyclase family.

The chain is Putative hydro-lyase Bamb_5282 from Burkholderia ambifaria (strain ATCC BAA-244 / DSM 16087 / CCUG 44356 / LMG 19182 / AMMD) (Burkholderia cepacia (strain AMMD)).